The following is a 65-amino-acid chain: uncharacterized protein (65 aa).

This is an uncharacterized protein from Pasteurella multocida (strain Pm70).